The sequence spans 126 residues: Glycine cleavage system H protein (126 aa).

The Lipoyl-binding domain occupies 23-105 (AATVGITDHA…YGEGWLLRVR (83 aa)). Lys64 is subject to N6-lipoyllysine.

It belongs to the GcvH family. In terms of assembly, the glycine cleavage system is composed of four proteins: P, T, L and H. (R)-lipoate serves as cofactor.

Functionally, the glycine cleavage system catalyzes the degradation of glycine. The H protein shuttles the methylamine group of glycine from the P protein to the T protein. This Rubrobacter xylanophilus (strain DSM 9941 / JCM 11954 / NBRC 16129 / PRD-1) protein is Glycine cleavage system H protein.